A 920-amino-acid polypeptide reads, in one-letter code: MSDPHSSPLLPEPLSSRYKLYEAEFTSPSWPSTSPDTHPALPLLEMPEEKDLRSSNEDSHIVKIEKLNERSKRKDDGVAHRDSAGQRCICLSKAVGYLTGDMKEYRIWLKDKHLALQFIDWVLRGTAQVMFINNPLSGLIIFIGLLIQNPWWTITGGLGTVVSTLTALALGQDRSAIASGLHGYNGMLVGLLMAVFSEKLDYYWWLLFPVTFTAMSCPVLSSALNSIFSKWDLPVFTLPFNIAVTLYLAATGHYNLFFPTTLVEPVSSVPNITWTEMEMPLLLQAIPVGVGQVYGCDNPWTGGVFLVALFISSPLICLHAAIGSIVGLLAALSVATPFETIYTGLWSYNCVLSCIAIGGMFYALTWQTHLLALICALFCAYMEAAISNIMSVVGVPPGTWAFCLATIIFLLLTTNNPAIFRLPLSKVTYPEANRIYYLTVKSGEEEKAPSGGGGEHPPTAGPKVEEGSEAVLSKHRSVFHIEWSSIRRRSKVFGKGEHQERQNKDPFPYRYRKPTVELLDLDTMEESSEIKVETNISKTSWIRSSMAASGKRVSKALSYITGEMKECGEGLKDKSPVFQFFDWVLRGTSQVMFVNNPLSGILIILGLFIQNPWWAISGCLGTIMSTLTALILSQDKSAIAAGFHGYNGVLVGLLMAVFSDKGDYYWWLLLPVIIMSMSCPILSSALGTIFSKWDLPVFTLPFNITVTLYLAATGHYNLFFPTTLLQPASAMPNITWSEVQVPLLLRAIPVGIGQVYGCDNPWTGGIFLIALFISSPLICLHAAIGSTMGMLAALTIATPFDSIYFGLCGFNSTLACIAIGGMFYVITWQTHLLAIACALFAAYLGAALANMLSVFGLPPCTWPFCLSALTFLLLTTNNPAIYKLPLSKVTYPEANRIYYLSQERNRRASIITKYQAYDVS.

A disordered region spans residues 25–57; it reads FTSPSWPSTSPDTHPALPLLEMPEEKDLRSSNE. Residues 26–39 are compositionally biased toward low complexity; that stretch reads TSPSWPSTSPDTHP. A compositionally biased stretch (basic and acidic residues) spans 47-57; the sequence is PEEKDLRSSNE. The next 9 membrane-spanning stretches (helical) occupy residues 151-170, 176-196, 204-224, 233-253, 272-291, 302-322, 346-366, 370-390, and 392-412; these read WWTI…ALAL, AIAS…MAVF, WWLL…SSAL, LPVF…ATGH, ITWT…VGVG, GGVF…HAAI, WSYN…ALTW, LLAL…SNIM, and VVGV…FLLL. The tract at residues 446–467 is disordered; the sequence is EKAPSGGGGEHPPTAGPKVEEG. Serine 477 is subject to Phosphoserine. The next 4 helical transmembrane spans lie at 600-620, 638-658, 666-686, and 695-715; these read GILI…SGCL, AIAA…MAVF, WWLL…SSAL, and LPVF…ATGH. N-linked (GlcNAc...) asparagine glycosylation is present at asparagine 733. A run of 4 helical transmembrane segments spans residues 764 to 784, 803 to 823, 832 to 852, and 854 to 874; these read GGIF…HAAI, IYFG…GGMF, LLAI…ANML, and VFGL…FLLL.

This sequence belongs to the urea transporter family. As to quaternary structure, interacts with SNAPIN which enhances its urea transport activity. In terms of tissue distribution, epressed in the inner medulla of the kidney (at protein level). Expressed in the kidney.

It localises to the apical cell membrane. Its subcellular location is the cell membrane. The enzyme catalyses urea(in) = urea(out). Its activity is regulated as follows. Inhibited by phloretin. Mediates the transport of urea driven by a concentration gradient across the cell membrane of the renal inner medullary collecting duct which is critical to the urinary concentrating mechanism. Functionally, mediates the transport of urea driven by a concentration gradient across the cell membrane of the kidney inner medullary collecting duct which is critical to the urinary concentrating mechanism. The polypeptide is Urea transporter 2 (SLC14A2) (Homo sapiens (Human)).